A 354-amino-acid polypeptide reads, in one-letter code: Peptide chain release factor 1 (354 aa).

Q231 is modified (N5-methylglutamine).

The protein belongs to the prokaryotic/mitochondrial release factor family. Post-translationally, methylated by PrmC. Methylation increases the termination efficiency of RF1.

It localises to the cytoplasm. Peptide chain release factor 1 directs the termination of translation in response to the peptide chain termination codons UAG and UAA. This chain is Peptide chain release factor 1, found in Acholeplasma laidlawii (strain PG-8A).